The chain runs to 265 residues: Homeobox protein engrailed-2-B (265 aa).

2 stretches are compositionally biased toward basic and acidic residues: residues 1–12 and 102–115; these read MEENEQNNREVE and GEKK…ETLK. Disordered regions lie at residues 1 to 38, 60 to 138, and 156 to 182; these read MEEN…QPHH, INHQ…SSKA, and DRPS…PRTA. Positions 122 to 136 are enriched in low complexity; it reads DHSLSSDSDSSQASS. A DNA-binding region (homeobox) is located at residues 176 to 235; it reads DKRPRTAFTAEQLQRLKAEFQTNRYLTEQRRQSLAQELGLNESQIKIWFQNKRAKIKKST.

It belongs to the engrailed homeobox family.

The protein localises to the nucleus. The protein is Homeobox protein engrailed-2-B (en2-b) of Xenopus laevis (African clawed frog).